Reading from the N-terminus, the 240-residue chain is Dephospho-CoA kinase domain-containing protein (240 aa).

The region spanning 3-207 (LVGLTGGIAS…RSMEYLPLRL (205 aa)) is the DPCK domain. 8-15 (GGIASGKS) is a binding site for ATP.

Belongs to the CoaE family.

The polypeptide is Dephospho-CoA kinase domain-containing protein (Dcakd) (Rattus norvegicus (Rat)).